Reading from the N-terminus, the 155-residue chain is Ribosome maturation factor RimP (155 aa).

This sequence belongs to the RimP family.

Its subcellular location is the cytoplasm. In terms of biological role, required for maturation of 30S ribosomal subunits. This chain is Ribosome maturation factor RimP, found in Prochlorococcus marinus (strain SARG / CCMP1375 / SS120).